The chain runs to 395 residues: ATP phosphoribosyltransferase regulatory subunit (395 aa).

It belongs to the class-II aminoacyl-tRNA synthetase family. HisZ subfamily. In terms of assembly, heteromultimer composed of HisG and HisZ subunits.

It is found in the cytoplasm. Its pathway is amino-acid biosynthesis; L-histidine biosynthesis; L-histidine from 5-phospho-alpha-D-ribose 1-diphosphate: step 1/9. Its function is as follows. Required for the first step of histidine biosynthesis. May allow the feedback regulation of ATP phosphoribosyltransferase activity by histidine. In Pseudomonas syringae pv. tomato (strain ATCC BAA-871 / DC3000), this protein is ATP phosphoribosyltransferase regulatory subunit.